The following is a 798-amino-acid chain: Probable DEAD-box ATP-dependent RNA helicase 48 (798 aa).

3 disordered regions span residues 76 to 100 (KMWG…MSPK), 117 to 148 (DFWN…NSPI), and 236 to 257 (FRKN…GKMI). A compositionally biased stretch (low complexity) spans 132 to 148 (GSRSGSDSIDSTSNSPI). Residues 242-252 (STEEDSDEEGD) are compositionally biased toward acidic residues. Residues 328–356 (KRFDESCISPLTLKALSASGILKMTRVQD) carry the Q motif motif. The 185-residue stretch at 359–543 (LSECLDGKDA…QLVLKRDHSY (185 aa)) folds into the Helicase ATP-binding domain. 372–379 (AKTGTGKS) is a binding site for ATP. The DEAD box motif lies at 491-494 (DEAD). Residues 577–726 (LLKEHINNTP…SIVKHQVDQS (150 aa)) enclose the Helicase C-terminal domain.

This sequence belongs to the DEAD box helicase family.

It carries out the reaction ATP + H2O = ADP + phosphate + H(+). This is Probable DEAD-box ATP-dependent RNA helicase 48 (RH48) from Arabidopsis thaliana (Mouse-ear cress).